A 500-amino-acid chain; its full sequence is Cytochrome P450 2D14 (500 aa).

A heme-binding site is contributed by Cys446.

This sequence belongs to the cytochrome P450 family. It depends on heme as a cofactor.

It is found in the endoplasmic reticulum membrane. The protein localises to the microsome membrane. The catalysed reaction is an organic molecule + reduced [NADPH--hemoprotein reductase] + O2 = an alcohol + oxidized [NADPH--hemoprotein reductase] + H2O + H(+). Cytochromes P450 are a group of heme-thiolate monooxygenases. In liver microsomes, this enzyme is involved in an NADPH-dependent electron transport pathway. It oxidizes a variety of structurally unrelated compounds, including steroids, fatty acids, and xenobiotics. The chain is Cytochrome P450 2D14 (CYP2D14) from Bos taurus (Bovine).